Reading from the N-terminus, the 598-residue chain is Aspartate--tRNA(Asp/Asn) ligase (598 aa).

Glu172 contacts L-aspartate. Residues Gln196–Lys199 form an aspartate region. Arg218 is an L-aspartate binding site. ATP contacts are provided by residues Arg218–Glu220 and Gln227. His455 lines the L-aspartate pocket. Residue Glu489 coordinates ATP. Residue Arg496 coordinates L-aspartate. Gly541–Arg544 is an ATP binding site.

This sequence belongs to the class-II aminoacyl-tRNA synthetase family. Type 1 subfamily. As to quaternary structure, homodimer.

It localises to the cytoplasm. It carries out the reaction tRNA(Asx) + L-aspartate + ATP = L-aspartyl-tRNA(Asx) + AMP + diphosphate. Functionally, aspartyl-tRNA synthetase with relaxed tRNA specificity since it is able to aspartylate not only its cognate tRNA(Asp) but also tRNA(Asn). Reaction proceeds in two steps: L-aspartate is first activated by ATP to form Asp-AMP and then transferred to the acceptor end of tRNA(Asp/Asn). The sequence is that of Aspartate--tRNA(Asp/Asn) ligase from Burkholderia mallei (strain ATCC 23344).